A 670-amino-acid chain; its full sequence is Protein ACCELERATED CELL DEATH 6 (670 aa).

The Cytoplasmic portion of the chain corresponds to 1–456; sequence MDSSGADLDR…PNYIFHERWT (456 aa). The tract at residues 18-47 is disordered; it reads LVSHDQRKDFSHSGGVGTTSPTGDTEPVPK. ANK repeat units follow at residues 66–95, 100–129, 134–163, 182–211, 216–248, 260–290, 295–325, 329–358, 363–391, and 399–428; these read EMTP…PMER, TGDS…CLLF, SRQT…SALA, DGNT…DAPF, KGIS…NVDR, QGNK…SLMD, DGRT…GVYV, DGSF…ASKY, LGQN…DTKH, and DGNT…EILK. Residues 457-477 form a helical membrane-spanning segment; it reads LALLLYAIHSSGFESVKSLTI. Residues 478–492 are Extracellular-facing; that stretch reads QSVPLDPKKNRHYVN. The helical transmembrane segment at 493 to 513 threads the bilayer; that stretch reads ALLVVAALVATVTFAAGFTIP. At 514-537 the chain is on the cytoplasmic side; the sequence is GGYISDSKKPNLGRATLATNPTLF. The chain crosses the membrane as a helical span at residues 538–558; the sequence is IFLLFDILAMQSSVATICTLI. At 559 to 577 the chain is on the extracellular side; sequence WAQLGDLALILKSLHVALP. The helical transmembrane segment at 578–598 threads the bilayer; that stretch reads LLLFSLLCMPVAFLFGVITAI. The Cytoplasmic portion of the chain corresponds to 599–602; the sequence is AHVK. The chain crosses the membrane as a helical span at residues 603 to 623; it reads WLLVTISIISGGFFLFAIFIL. Residues 624–638 are Extracellular-facing; it reads GPHVMLQRSHLPPSS. Residues 639 to 659 traverse the membrane as a helical segment; that stretch reads GIFLKTFMLTIDISELFVILI. The Cytoplasmic segment spans residues 660 to 670; the sequence is KACFGCVACSE.

As to quaternary structure, component of large complexes containing, at least, FLS2, HSP70 and ACD6 in endoplasmic reticulum, plasma membrane and soluble fraction. Associated with HSP70 proteins during endoplasmic reticulum-associated degradation (ERAD). Reduced complex levels upon benzothiazole (BTH) treatment. Post-translationally, ubiquitinated. As to expression, basal expression requires light and salicylic acid (SA).

Its subcellular location is the cell membrane. It localises to the endoplasmic reticulum membrane. Dose-dependent activator of the defense response against virulent pathogens, including bacteria, fungi and oomycetes, that acts in a positive feedback loop with the defense signal salicylic acid (SA). Regulates the salicylic acid (SA) signaling pathway leading to cell death and modulating cell fate (e.g. cell enlargement and/or cell division). In response to SA signaling, triggers the accumulation of FLS2 at the plasma membrane, thus priming defenses. Involved in SA-dependent freezing signaling and tolerance. In Arabidopsis thaliana (Mouse-ear cress), this protein is Protein ACCELERATED CELL DEATH 6.